The sequence spans 393 residues: NAD(P)H-quinone oxidoreductase subunit H, chloroplastic (393 aa).

This sequence belongs to the complex I 49 kDa subunit family. NDH is composed of at least 16 different subunits, 5 of which are encoded in the nucleus.

The protein localises to the plastid. It is found in the chloroplast thylakoid membrane. The catalysed reaction is a plastoquinone + NADH + (n+1) H(+)(in) = a plastoquinol + NAD(+) + n H(+)(out). It catalyses the reaction a plastoquinone + NADPH + (n+1) H(+)(in) = a plastoquinol + NADP(+) + n H(+)(out). Its function is as follows. NDH shuttles electrons from NAD(P)H:plastoquinone, via FMN and iron-sulfur (Fe-S) centers, to quinones in the photosynthetic chain and possibly in a chloroplast respiratory chain. The immediate electron acceptor for the enzyme in this species is believed to be plastoquinone. Couples the redox reaction to proton translocation, and thus conserves the redox energy in a proton gradient. This Huperzia lucidula (Shining clubmoss) protein is NAD(P)H-quinone oxidoreductase subunit H, chloroplastic.